The sequence spans 157 residues: Small heat shock protein ibp (157 aa).

Residues 35–148 (EKPISDTPTY…KPKKISINVP (114 aa)) enclose the sHSP domain.

It belongs to the small heat shock protein (HSP20) family.

The chain is Small heat shock protein ibp (ibp) from Buchnera aphidicola subsp. Acyrthosiphon pisum (strain APS) (Acyrthosiphon pisum symbiotic bacterium).